Here is a 473-residue protein sequence, read N- to C-terminus: Glutamate--tRNA ligase (473 aa).

The 'HIGH' region signature appears at 11–21; the sequence is PSPTGFLHIGG. A 'KMSKS' region motif is present at residues 240 to 244; that stretch reads KLSKR. Lys-243 is an ATP binding site.

This sequence belongs to the class-I aminoacyl-tRNA synthetase family. Glutamate--tRNA ligase type 1 subfamily. Monomer.

The protein localises to the cytoplasm. The catalysed reaction is tRNA(Glu) + L-glutamate + ATP = L-glutamyl-tRNA(Glu) + AMP + diphosphate. Functionally, catalyzes the attachment of glutamate to tRNA(Glu) in a two-step reaction: glutamate is first activated by ATP to form Glu-AMP and then transferred to the acceptor end of tRNA(Glu). The polypeptide is Glutamate--tRNA ligase (Rhodopseudomonas palustris (strain HaA2)).